A 154-amino-acid polypeptide reads, in one-letter code: Large ribosomal subunit protein uL30 (154 aa).

Belongs to the universal ribosomal protein uL30 family. Part of the 50S ribosomal subunit.

The protein is Large ribosomal subunit protein uL30 of Methanococcus maripaludis (strain C5 / ATCC BAA-1333).